A 558-amino-acid polypeptide reads, in one-letter code: MSFKTDAEIAQSSTMRPIGEIAAKLGLNADNIEPYGHYKAKINPAEAFKLPQKQGRLILVTAINPTPAGEGKTTVTIGLADALRHIGKDAVIALREPSLGPVFGVKGGAAGGGYAQVLPMEDINLHFTGDFHAIGAANNLLAAMLDNHIYQGNELDIDPKRVLWRRVVDMNDRQLRNIIDGMGKPVDGVMRPDGFDITVASEVMAVFCLAKDISDLKERLGNILVAYAKDGSPVYAKDLKAHGAMAVLLKDAIKPNLVQTIEGTPAFVHGGPFANIAHGCNSVTATRLAKHLADYAVTEAGFGADLGAEKFCDIKCRLAGLKPDAAVVVATVRALKYNGGVERANLGEENLEALAKGLPNLLKHISNLKNVFGLPVVVALNRFVSDSDAELAMIEKACAEHGVEVSLTEVWGKGGVGGADLARKVVNAIENQPNNFNFSYDVELSIKDKIRAIAQKVYGAEDVDFSAEASAEIASLEKLGLDKMPICMAKTQYSLSDNAKLLGCPEGFRITVRGITVSSGAGFIVALCGNMMKMPGLPKVPAAEKIDVDAEGVIHGLF.

Position 66 to 73 (66 to 73) interacts with ATP; the sequence is TPAGEGKT.

It belongs to the formate--tetrahydrofolate ligase family.

It catalyses the reaction (6S)-5,6,7,8-tetrahydrofolate + formate + ATP = (6R)-10-formyltetrahydrofolate + ADP + phosphate. It participates in one-carbon metabolism; tetrahydrofolate interconversion. This is Formate--tetrahydrofolate ligase from Neisseria meningitidis serogroup C / serotype 2a (strain ATCC 700532 / DSM 15464 / FAM18).